The chain runs to 180 residues: Ribulose bisphosphate carboxylase small subunit, chloroplastic 1 (180 aa).

The transit peptide at 1–56 (MASSVISSAAVATRTNVAQASMVAPFNGLKSAVSFPVSSKQNLDITSIASNGGRVQ) directs the protein to the chloroplast.

This sequence belongs to the RuBisCO small chain family. As to quaternary structure, heterohexadecamer of 8 large and 8 small subunits.

The protein resides in the plastid. Its subcellular location is the chloroplast. RuBisCO catalyzes two reactions: the carboxylation of D-ribulose 1,5-bisphosphate, the primary event in carbon dioxide fixation, as well as the oxidative fragmentation of the pentose substrate. Both reactions occur simultaneously and in competition at the same active site. Although the small subunit is not catalytic it is essential for maximal activity. The polypeptide is Ribulose bisphosphate carboxylase small subunit, chloroplastic 1 (Petunia hybrida (Petunia)).